The sequence spans 191 residues: Negative modulator of initiation of replication (191 aa).

The tract at residues 96–97 (AV) is interaction with DNA.

It belongs to the SeqA family. Homodimer. Polymerizes to form helical filaments.

Its subcellular location is the cytoplasm. In terms of biological role, negative regulator of replication initiation, which contributes to regulation of DNA replication and ensures that replication initiation occurs exactly once per chromosome per cell cycle. Binds to pairs of hemimethylated GATC sequences in the oriC region, thus preventing assembly of replication proteins and re-initiation at newly replicated origins. Repression is relieved when the region becomes fully methylated. This Shewanella amazonensis (strain ATCC BAA-1098 / SB2B) protein is Negative modulator of initiation of replication.